Here is a 298-residue protein sequence, read N- to C-terminus: Adaptation to cold protein C (298 aa).

Interacts with the C-terminal extension of AtcJ. Also interacts with AtcB, but not with AtcA.

With respect to regulation, interaction with AtcJ stabilizes AtcC. Functionally, involved in cold adaptation. In Shewanella oneidensis (strain ATCC 700550 / JCM 31522 / CIP 106686 / LMG 19005 / NCIMB 14063 / MR-1), this protein is Adaptation to cold protein C.